The primary structure comprises 393 residues: BEN domain-containing protein 5 (393 aa).

A coiled-coil region spans residues 169-212; the sequence is RVLYEELLRSYQQQQQEMKHIQHELERTRKQLVQQAKKLKDYGS. A BEN domain is found at 274-380; the sequence is GSGVWVNEEK…EKIMDINKSC (107 aa).

Its function is as follows. May act as a transcriptional repressor. The polypeptide is BEN domain-containing protein 5 (bend5) (Xenopus laevis (African clawed frog)).